The sequence spans 576 residues: S-layer protein (576 aa).

A signal peptide spans 1–23 (KKIGAIAAGSAMVASALATGVFA). N-linked (GlcNAc...) asparagine glycosylation is found at asparagine 102 and asparagine 132.

The protein belongs to the Mj S-layer protein family. N-linked glycans consist of the 779 Da trisaccharide beta-ManNAc(Thr)-(1-4)-beta-GlcNAc3NAcA-(1-3)-beta-GlcNAc.

Its subcellular location is the secreted. It is found in the cell wall. The protein localises to the S-layer. S-layer protein. The S-layer is a paracrystalline mono-layered assembly of proteins which coat the surface of the cell. This Methanococcus voltae protein is S-layer protein (sla).